The sequence spans 469 residues: Probable ribonuclease FAU-1 (469 aa).

Belongs to the FAU-1 family.

Functionally, probable RNase involved in rRNA stability through maturation and/or degradation of precursor rRNAs. Binds to RNA in loop regions with AU-rich sequences. This chain is Probable ribonuclease FAU-1, found in Pyrococcus abyssi (strain GE5 / Orsay).